The chain runs to 802 residues: Chondroitin sulfate synthase 1 (802 aa).

Over 1–7 (MAARGRR) the chain is Cytoplasmic. The helical; Signal-anchor for type II membrane protein transmembrane segment at 8-28 (AWLSVLLGLVLGFVLASRLVL) threads the bilayer. Topologically, residues 29–802 (PRASELKRAG…SNNNGSVRTA (774 aa)) are lumenal. The interval 34-82 (LKRAGPRRRASPEGCRSGQAAASQAGGARGDARGAQLWPPGSDPDGGPR) is disordered. Low complexity-rich tracts occupy residues 49-59 (RSGQAAASQAG) and 66-78 (RGAQ…SDPD). N-linked (GlcNAc...) asparagine glycans are attached at residues asparagine 189 and asparagine 623. A divalent metal cation-binding residues include aspartate 633 and histidine 747. Asparagine 796 carries N-linked (GlcNAc...) asparagine glycosylation.

It belongs to the chondroitin N-acetylgalactosaminyltransferase family. The cofactor is Co(2+). Mn(2+) is required as a cofactor. Requires Cd(2+) as cofactor. As to expression, ubiquitous, with the highest levels in placenta. Detected at low levels in brain, heart, skeletal muscle, colon, thymus, spleen, kidney, liver, adrenal gland, mammary gland, stomach, small intestine, lung and peripheral blood leukocytes.

Its subcellular location is the golgi apparatus. It is found in the golgi stack membrane. It localises to the secreted. The catalysed reaction is 3-O-(beta-D-GlcA-(1-&gt;3)-beta-D-GalNAc-(1-&gt;4)-beta-D-GlcA-(1-&gt;3)-beta-D-Gal-(1-&gt;3)-beta-D-Gal-(1-&gt;4)-beta-D-Xyl)-L-seryl-[protein] + UDP-N-acetyl-alpha-D-galactosamine = 3-O-(beta-D-GalNAc-(1-&gt;4)-beta-D-GlcA-(1-&gt;3)-beta-D-GalNAc-(1-&gt;4)-beta-D-GlcA-(1-&gt;3)-beta-D-Gal-(1-&gt;3)-beta-D-Gal-(1-&gt;4)-beta-D-Xyl)-L-seryl-[protein] + UDP + H(+). It carries out the reaction 3-O-{beta-D-GlcA-(1-&gt;3)-[beta-D-GalNAc-(1-&gt;4)-beta-D-GlcA-(1-&gt;3)](n)-beta-D-GalNAc-(1-&gt;4)-beta-D-GlcA-(1-&gt;3)-beta-D-Gal-(1-&gt;3)-beta-D-Gal-(1-&gt;4)-beta-D-Xyl}-L-seryl-[protein] + UDP-N-acetyl-alpha-D-galactosamine = 3-O-{[beta-D-GalNAc-(1-&gt;4)-beta-D-GlcA-(1-&gt;3)](n+1)-beta-D-GalNAc-(1-&gt;4)-beta-D-GlcA-(1-&gt;3)-beta-D-Gal-(1-&gt;3)-beta-D-Gal-(1-&gt;4)-beta-D-Xyl}-L-seryl-[protein] + UDP + H(+). The enzyme catalyses 3-O-(beta-D-GalNAc-(1-&gt;4)-beta-D-GlcA-(1-&gt;3)-beta-D-Gal-(1-&gt;3)-beta-D-Gal-(1-&gt;4)-beta-D-Xyl)-L-seryl-[protein] + UDP-alpha-D-glucuronate = 3-O-(beta-D-GlcA-(1-&gt;3)-beta-D-GalNAc-(1-&gt;4)-beta-D-GlcA-(1-&gt;3)-beta-D-Gal-(1-&gt;3)-beta-D-Gal-(1-&gt;4)-beta-D-Xyl)-L-seryl-[protein] + UDP + H(+). It catalyses the reaction 3-O-{[beta-D-GalNAc-(1-&gt;4)-beta-D-GlcA-(1-&gt;3)](n)-beta-D-GalNAc-(1-&gt;4)-beta-D-GlcA-(1-&gt;3)-beta-D-Gal-(1-&gt;3)-beta-D-Gal-(1-&gt;4)-beta-D-Xyl}-L-seryl-[protein] + UDP-alpha-D-glucuronate = 3-O-{beta-D-GlcA-(1-&gt;3)-[beta-D-GalNAc-(1-&gt;4)-beta-D-GlcA-(1-&gt;3)](n)-beta-D-GalNAc-(1-&gt;4)-beta-D-GlcA-(1-&gt;3)-beta-D-Gal-(1-&gt;3)-beta-D-Gal-(1-&gt;4)-beta-D-Xyl}-L-seryl-[protein] + UDP + H(+). Its function is as follows. Has both beta-1,3-glucuronic acid and beta-1,4-N-acetylgalactosamine transferase activity. Transfers glucuronic acid (GlcUA) from UDP-GlcUA and N-acetylgalactosamine (GalNAc) from UDP-GalNAc to the non-reducing end of the elongating chondroitin polymer. Involved in the negative control of osteogenesis likely through the modulation of NOTCH signaling. This Homo sapiens (Human) protein is Chondroitin sulfate synthase 1.